A 258-amino-acid chain; its full sequence is Eukaryotic translation initiation factor 3 subunit J (258 aa).

Positions 1–11 (MAAAAAAAGDS) are enriched in low complexity. The tract at residues 1-108 (MAAAAAAAGD…LEEPEEPKVL (108 aa)) is disordered. Alanine 2 carries the post-translational modification N-acetylalanine. Residues 2-69 (AAAAAAAGDS…KEEAEVKPEV (68 aa)) are sufficient for interaction with EIF3B. Residues serine 11, serine 13, and serine 20 each carry the phosphoserine modification. The segment covering 40–59 (EGEDEDEDVKDNWDDDDDEK) has biased composition (acidic residues). The segment covering 60–106 (KEEAEVKPEVKISEKKKIAEKIKEKERQQKKRQEEIKKRLEEPEEPK) has biased composition (basic and acidic residues). The stretch at 70–135 (KISEKKKIAE…ESDLELAKET (66 aa)) forms a coiled coil. Lysine 106 is covalently cross-linked (Glycyl lysine isopeptide (Lys-Gly) (interchain with G-Cter in SUMO2)). Threonine 109 bears the Phosphothreonine mark. A Phosphoserine modification is found at serine 127. A disordered region spans residues 217–238 (SKAKKKKKGVVPGGGLKATMKD). The tract at residues 243-258 (YGGYDGGYVQDYEDFM) is promotes stable association with the 40S ribosome. Tyrosine 254 bears the Phosphotyrosine mark.

In terms of assembly, component of the eukaryotic translation initiation factor 3 (eIF-3) complex, which is composed of 13 subunits: EIF3A, EIF3B, EIF3C, EIF3D, EIF3E, EIF3F, EIF3G, EIF3H, EIF3I, EIF3J, EIF3K, EIF3L and EIF3M. The eIF-3 complex appears to include 3 stable modules: module A is composed of EIF3A, EIF3B, EIF3G and EIF3I; module B is composed of EIF3F, EIF3H, and EIF3M; and module C is composed of EIF3C, EIF3D, EIF3E, EIF3K and EIF3L. EIF3C of module C binds EIF3B of module A and EIF3H of module B, thereby linking the three modules. EIF3J is a labile subunit that binds to the eIF-3 complex via EIF3B. The eIF-3 complex interacts with RPS6KB1 under conditions of nutrient depletion. Mitogenic stimulation leads to binding and activation of a complex composed of MTOR and RPTOR, leading to phosphorylation and release of RPS6KB1 and binding of EIF4B to eIF-3. Phosphorylated. Phosphorylation is enhanced upon serum stimulation.

The protein localises to the cytoplasm. Functionally, component of the eukaryotic translation initiation factor 3 (eIF-3) complex, which is required for several steps in the initiation of protein synthesis. The eIF-3 complex associates with the 40S ribosome and facilitates the recruitment of eIF-1, eIF-1A, eIF-2:GTP:methionyl-tRNAi and eIF-5 to form the 43S pre-initiation complex (43S PIC). The eIF-3 complex stimulates mRNA recruitment to the 43S PIC and scanning of the mRNA for AUG recognition. The eIF-3 complex is also required for disassembly and recycling of post-termination ribosomal complexes and subsequently prevents premature joining of the 40S and 60S ribosomal subunits prior to initiation. The eIF-3 complex specifically targets and initiates translation of a subset of mRNAs involved in cell proliferation, including cell cycling, differentiation and apoptosis, and uses different modes of RNA stem-loop binding to exert either translational activation or repression. The polypeptide is Eukaryotic translation initiation factor 3 subunit J (Homo sapiens (Human)).